A 1083-amino-acid chain; its full sequence is Ubiquitin-protein ligase E3C (1083 aa).

2 stretches are compositionally biased toward basic and acidic residues: residues 1–10 (MFSFEGDFKT) and 20–40 (SRKE…RKRE). The tract at residues 1–40 (MFSFEGDFKTRPKVSLGGASRKEEKASLLHRTQEERRKRE) is disordered. The segment at 1 to 60 (MFSFEGDFKTRPKVSLGGASRKEEKASLLHRTQEERRKREEERRRLKNAIIIQSFIRGYR) is cis-determinant of acceptor ubiquitin-binding. Positions 45 to 74 (RLKNAIIIQSFIRGYRDRKQQYSIQRSAFD) constitute an IQ domain. A disordered region spans residues 355 to 385 (SPASASCHDSASDSEEESEEADKPSSPEDGR). Residues 375 to 385 (ADKPSSPEDGR) show a composition bias toward basic and acidic residues. Residues 744 to 1083 (NEPDLKKRIR…IECAAGFELS (340 aa)) enclose the HECT domain. A Glycyl lysine isopeptide (Lys-Gly) (interchain with G-Cter in ubiquitin); by autocatalysis cross-link involves residue lysine 903. Residue cysteine 1051 is the Glycyl thioester intermediate of the active site.

It belongs to the UBE3C family. In terms of assembly, interacts with 26S proteasomes. Interacts (via the HECT domain) with UBE2D1 and, less efficiently, with UBE2L3. Autoubiquitinated; promoting its own degradation. In terms of tissue distribution, highly expressed in skeletal muscle. Detected at much lower levels in kidney and pancreas.

The catalysed reaction is S-ubiquitinyl-[E2 ubiquitin-conjugating enzyme]-L-cysteine + [acceptor protein]-L-lysine = [E2 ubiquitin-conjugating enzyme]-L-cysteine + N(6)-ubiquitinyl-[acceptor protein]-L-lysine.. Its pathway is protein modification; protein ubiquitination. Its function is as follows. E3 ubiquitin-protein ligase that specifically catalyzes 'Lys-29'- and 'Lys-48'-linked polyubiquitin chains. Accepts ubiquitin from the E2 ubiquitin-conjugating enzyme UBE2D1 in the form of a thioester and then directly transfers the ubiquitin to targeted substrates. Associates with the proteasome and promotes elongation of ubiquitin chains on substrates bound to the 26S proteasome. Also catalyzes 'Lys-29'- and 'Lys-48'-linked ubiquitination of 26S proteasome subunit ADRM1/RPN13 in response to proteotoxic stress, impairing the ability of the proteasome to bind and degrade ubiquitin-conjugated proteins. Acts as a negative regulator of autophagy by mediating 'Lys-29'- and 'Lys-48'-linked ubiquitination of PIK3C3/VPS34, promoting its degradation. Can assemble unanchored poly-ubiquitin chains in either 'Lys-29'- or 'Lys-48'-linked polyubiquitin chains; with some preference for 'Lys-48' linkages. Acts as a negative regulator of type I interferon by mediating 'Lys-48'-linked ubiquitination of IRF3 and IRF7, leading to their degradation by the proteasome. Catalyzes ubiquitination and degradation of CAND2. In Homo sapiens (Human), this protein is Ubiquitin-protein ligase E3C.